Consider the following 804-residue polypeptide: Phenylalanine--tRNA ligase beta subunit (804 aa).

The 111-residue stretch at 38 to 148 folds into the tRNA-binding domain; that stretch reads RSSLKGFVIA…EDAPIGGLFA (111 aa). Residues 401-476 enclose the B5 domain; it reads PEIKQIAFPF…RIYGLDKIEP (76 aa). Mg(2+) contacts are provided by D454, D460, E463, and E464. Positions 710–803 constitute an FDX-ACB domain; the sequence is SPFQMVRRDF…VTKATGAYLR (94 aa).

The protein belongs to the phenylalanyl-tRNA synthetase beta subunit family. Type 1 subfamily. In terms of assembly, tetramer of two alpha and two beta subunits. The cofactor is Mg(2+).

The protein localises to the cytoplasm. The enzyme catalyses tRNA(Phe) + L-phenylalanine + ATP = L-phenylalanyl-tRNA(Phe) + AMP + diphosphate + H(+). This chain is Phenylalanine--tRNA ligase beta subunit, found in Bartonella quintana (strain Toulouse) (Rochalimaea quintana).